The chain runs to 187 residues: ECF RNA polymerase sigma factor SigW (187 aa).

Residues 3-95 (MMIKKRIKQV…RKKKPDYYLD (93 aa)) form a sigma-70 factor domain-2 region. The Polymerase core binding signature appears at 47-50 (DIAQ). Residues 125-187 (ELSNTIQQKI…EALRKQLRDL (63 aa)) form a sigma-70 factor domain-4 region. Residues 166–184 (VGTVKTRIHRGREALRKQL) constitute a DNA-binding region (H-T-H motif).

This sequence belongs to the sigma-70 factor family. ECF subfamily. As to quaternary structure, interacts transiently with the RNA polymerase catalytic core formed by RpoA, RpoB, RpoC and RpoZ (2 alpha, 1 beta, 1 beta' and 1 omega subunit) to form the RNA polymerase holoenzyme that can initiate transcription. Forms a heterodimer with cognate anti-sigma factor RsiW, which prevents it from binding to the -10 and -35 promoter elements.

Extracytoplasmic function (ECF) sigma factors are held in an inactive form by a cognate anti-sigma factor (RsiW for this protein) until released by regulated membrane proteolysis (RIP). RIP occurs when an extracytoplasmic signal (envelope stress) triggers a concerted proteolytic cascade to transmit information and elicit cellular responses. The anti-sigma factor RsiW is a membrane protein, binding sigma-W in the cytoplasm. RsiW is first cut extracytoplasmically (site-1 protease, S1P, by PrsW), then within the membrane itself (site-2 protease, S2P, by RasP), while cytoplasmic proteases (predominantly ClpX-ClpP) finish degrading the regulatory protein, liberating sigma-W. In terms of biological role, sigma factors are initiation factors that promote the attachment of RNA polymerase (RNAP) to specific initiation sites and are then released. Sigma-W controls genes involved in response to cell envelope stress such as antimicrobial peptides, alkaline pH, transport processes and detoxification. In Bacillus subtilis (strain 168), this protein is ECF RNA polymerase sigma factor SigW (sigW).